A 495-amino-acid polypeptide reads, in one-letter code: MFPSSDFSFSPSSLFSAYASLTGFLMLFRSMLHDFVPEKLRSYFSSLLDRFFTPKSKYLTVIIDENFGLNRNQVFDAAEMYLRSKIGPETERLRVGKIPKQKHFTISIERGEEILDTFEESEVKWSYVQSENEKGDKVKRYYELTFEKKLRDKVLNSYLTHVVAESEEIKRNLRVVKLYSRDVYASDDDDGMAGGNWGCINLEHPSTFDTLAMDPNAKKKIIDDLERFLKRKEFYKRVGKAWKRGYLLYGPPGTGKSSLIAAMANYLKFDVFDLELSSIYDNGELKRVLLSTTNRSILVIEDIDCNAEVRDREAENQEDEQIKGKVTLSGILNFIDGLWSSFGDERIIVFTTNHKERLDPALLRPGRMDVHINMSYCTGLGFRTLVSNYLGLDGLNHPLCEEIEALVDSTEVTPAELAEELMQDDDTDVVLRGVISFVEKRKVERSKTKKEVSICKATDDDEKQNGSLGCVKKKKKGGKQKGKGKGKGKAKTYLI.

The helical transmembrane segment at 7-28 (FSFSPSSLFSAYASLTGFLMLF) threads the bilayer. 250-257 (GPPGTGKS) serves as a coordination point for ATP. Residues 451 to 495 (EVSICKATDDDEKQNGSLGCVKKKKKGGKQKGKGKGKGKAKTYLI) are disordered. The segment covering 471–495 (VKKKKKGGKQKGKGKGKGKAKTYLI) has biased composition (basic residues).

This sequence belongs to the AAA ATPase family. BCS1 subfamily. The cofactor is Mg(2+).

Its subcellular location is the membrane. The enzyme catalyses ATP + H2O = ADP + phosphate + H(+). The sequence is that of AAA-ATPase At2g18193 from Arabidopsis thaliana (Mouse-ear cress).